The chain runs to 110 residues: MVNWAAVVDAFYVELFTAHPQYQDRFAFKGVALGDLKGNAAYQTQASKTVDYITAALAGSADAAGLASRHVGRNVGAPEFTHAKACLAKACAANGAPDLGGAVDAIISHF.

Positions 2–110 (VNWAAVVDAF…GAVDAIISHF (109 aa)) constitute a Globin domain. His-70 serves as a coordination point for heme.

It belongs to the globin family. As to quaternary structure, homotetramer.

The sequence is that of Body wall hemoglobin from Cerebratulus lacteus (Milky ribbon worm).